The primary structure comprises 434 residues: Methylenetetrahydrofolate--tRNA-(uracil-5-)-methyltransferase TrmFO (434 aa).

FAD is bound at residue Gly10 to Gly15.

It belongs to the MnmG family. TrmFO subfamily. It depends on FAD as a cofactor.

It is found in the cytoplasm. The enzyme catalyses uridine(54) in tRNA + (6R)-5,10-methylene-5,6,7,8-tetrahydrofolate + NADH + H(+) = 5-methyluridine(54) in tRNA + (6S)-5,6,7,8-tetrahydrofolate + NAD(+). It carries out the reaction uridine(54) in tRNA + (6R)-5,10-methylene-5,6,7,8-tetrahydrofolate + NADPH + H(+) = 5-methyluridine(54) in tRNA + (6S)-5,6,7,8-tetrahydrofolate + NADP(+). Functionally, catalyzes the folate-dependent formation of 5-methyl-uridine at position 54 (M-5-U54) in all tRNAs. This Bacillus cereus (strain Q1) protein is Methylenetetrahydrofolate--tRNA-(uracil-5-)-methyltransferase TrmFO.